The chain runs to 67 residues: DNA gyrase inhibitor YacG (67 aa).

Residues Cys-9, Cys-12, Cys-28, and Cys-32 each coordinate Zn(2+). A disordered region spans residues 48-67 (PVSPDAEDELFSEELPPRAH).

This sequence belongs to the DNA gyrase inhibitor YacG family. In terms of assembly, interacts with GyrB. Zn(2+) is required as a cofactor.

Inhibits all the catalytic activities of DNA gyrase by preventing its interaction with DNA. Acts by binding directly to the C-terminal domain of GyrB, which probably disrupts DNA binding by the gyrase. In Pseudomonas fluorescens (strain ATCC BAA-477 / NRRL B-23932 / Pf-5), this protein is DNA gyrase inhibitor YacG.